Consider the following 188-residue polypeptide: Elongation factor P (188 aa).

The protein belongs to the elongation factor P family.

It is found in the cytoplasm. It participates in protein biosynthesis; polypeptide chain elongation. Involved in peptide bond synthesis. Stimulates efficient translation and peptide-bond synthesis on native or reconstituted 70S ribosomes in vitro. Probably functions indirectly by altering the affinity of the ribosome for aminoacyl-tRNA, thus increasing their reactivity as acceptors for peptidyl transferase. This Rickettsia typhi (strain ATCC VR-144 / Wilmington) protein is Elongation factor P.